Reading from the N-terminus, the 684-residue chain is Amino-acid acetyltransferase, mitochondrial (684 aa).

Positions 414–439 (PQDATNSASEPRDPSQLSTVATRRKR) are disordered. The segment covering 415 to 434 (QDATNSASEPRDPSQLSTVA) has biased composition (polar residues). An N-acetyltransferase domain is found at 505–674 (GKSRMTLNDP…YEGVCRGIEP (170 aa)).

It belongs to the acetyltransferase family.

It localises to the mitochondrion. The enzyme catalyses L-glutamate + acetyl-CoA = N-acetyl-L-glutamate + CoA + H(+). The protein operates within amino-acid biosynthesis; L-arginine biosynthesis; N(2)-acetyl-L-ornithine from L-glutamate: step 1/4. Its function is as follows. N-acetylglutamate synthase involved in arginine biosynthesis. This chain is Amino-acid acetyltransferase, mitochondrial (ARG2), found in Ajellomyces capsulatus (strain NAm1 / WU24) (Darling's disease fungus).